Here is a 197-residue protein sequence, read N- to C-terminus: GTP cyclohydrolase-2 (197 aa).

50–54 (RIHSE) contributes to the GTP binding site. Zn(2+) contacts are provided by Cys-55, Cys-66, and Cys-68. GTP-binding positions include Gln-71, 93–95 (EGR), and Thr-115. The active-site Proton acceptor is Asp-127. Arg-129 serves as the catalytic Nucleophile. GTP-binding residues include Thr-150 and Lys-155.

This sequence belongs to the GTP cyclohydrolase II family. Zn(2+) serves as cofactor.

It carries out the reaction GTP + 4 H2O = 2,5-diamino-6-hydroxy-4-(5-phosphoribosylamino)-pyrimidine + formate + 2 phosphate + 3 H(+). It participates in cofactor biosynthesis; riboflavin biosynthesis; 5-amino-6-(D-ribitylamino)uracil from GTP: step 1/4. Its function is as follows. Catalyzes the conversion of GTP to 2,5-diamino-6-ribosylamino-4(3H)-pyrimidinone 5'-phosphate (DARP), formate and pyrophosphate. This Neisseria gonorrhoeae (strain ATCC 700825 / FA 1090) protein is GTP cyclohydrolase-2.